A 265-amino-acid chain; its full sequence is Probable aquaporin TIP3-2 (265 aa).

The next 2 membrane-spanning stretches (helical) occupy residues 32-52 and 62-82; these read LSEF…VYGL and LGGL…AVAV. Positions 92–94 match the NPA 1 motif; sequence NPA. Transmembrane regions (helical) follow at residues 110–130, 151–171, and 179–199; these read AALY…LLRL, ALLL…ATAV, and DIAP…GGPF. The NPA 2 signature appears at 205–207; sequence NPA. A helical transmembrane segment spans residues 223-243; it reads WVYWLGPLIGAGMAGALYEFV.

Belongs to the MIP/aquaporin (TC 1.A.8) family. TIP (TC 1.A.8.10) subfamily. Expressed in leaves and at lower levels in roots.

It is found in the vacuole membrane. In terms of biological role, aquaporins facilitate the transport of water and small neutral solutes across cell membranes. May be involved in transport from the vacuolar compartment to the cytoplasm. The sequence is that of Probable aquaporin TIP3-2 (TIP3-2) from Oryza sativa subsp. japonica (Rice).